Consider the following 449-residue polypeptide: Asparagine--tRNA ligase (449 aa).

The protein belongs to the class-II aminoacyl-tRNA synthetase family. As to quaternary structure, homodimer.

The protein localises to the cytoplasm. The enzyme catalyses tRNA(Asn) + L-asparagine + ATP = L-asparaginyl-tRNA(Asn) + AMP + diphosphate + H(+). This Mesomycoplasma hyopneumoniae (strain 232) (Mycoplasma hyopneumoniae) protein is Asparagine--tRNA ligase.